The sequence spans 1142 residues: Error-prone DNA polymerase (1142 aa).

Positions 291–361 (TSSPAQAARE…GTGAAAGTDR (71 aa)) are disordered. 2 stretches are compositionally biased toward low complexity: residues 311-320 (LRASLPAERP) and 327-344 (GPAA…PGEP). The segment covering 345-355 (GLAGAGGGTGA) has biased composition (gly residues).

Belongs to the DNA polymerase type-C family. DnaE2 subfamily.

The protein resides in the cytoplasm. The enzyme catalyses DNA(n) + a 2'-deoxyribonucleoside 5'-triphosphate = DNA(n+1) + diphosphate. In terms of biological role, DNA polymerase involved in damage-induced mutagenesis and translesion synthesis (TLS). It is not the major replicative DNA polymerase. The polypeptide is Error-prone DNA polymerase (Anaeromyxobacter dehalogenans (strain 2CP-1 / ATCC BAA-258)).